A 314-amino-acid polypeptide reads, in one-letter code: ATP synthase gamma chain (314 aa).

Belongs to the ATPase gamma chain family. F-type ATPases have 2 components, CF(1) - the catalytic core - and CF(0) - the membrane proton channel. CF(1) has five subunits: alpha(3), beta(3), gamma(1), delta(1), epsilon(1). CF(0) has three main subunits: a, b and c.

It localises to the cellular thylakoid membrane. Its function is as follows. Produces ATP from ADP in the presence of a proton gradient across the membrane. The gamma chain is believed to be important in regulating ATPase activity and the flow of protons through the CF(0) complex. The chain is ATP synthase gamma chain from Synechococcus sp. (strain JA-3-3Ab) (Cyanobacteria bacterium Yellowstone A-Prime).